The primary structure comprises 467 residues: Mitochondrial adenyl nucleotide antiporter SLC25A23 (467 aa).

The interval 1–148 (MRGGSSDAER…DHFLLHSLEN (148 aa)) is regulatory N-terminal domain. The Mitochondrial intermembrane portion of the chain corresponds to 1 to 187 (MRGGSSDAER…EKLTGMWWKQ (187 aa)). 3 EF-hand domains span residues 9 to 44 (ERRQ…LGRG), 76 to 111 (EREQ…LGIS), and 112 to 147 (ISLE…HSLE). Ca(2+)-binding residues include aspartate 22, asparagine 24, aspartate 26, arginine 28, and glutamate 33. The disordered stretch occupies residues 39-61 (ARLGRGDPDRAQQGVSSDWDADP). Ca(2+)-binding residues include aspartate 89, asparagine 91, aspartate 93, histidine 95, and glutamate 100. Residues 149–158 (VEDVLYFWKH) form a linker region region. The interval 164–467 (IGECLTVPDE…MKQALGVTSR (304 aa)) is C-terminal transmembrane transporter domain. 3 Solcar repeats span residues 182 to 268 (GMWW…IKRA), 276 to 361 (LHVQ…LKNR), and 373 to 461 (PGIL…MKQA). A helical membrane pass occupies residues 188–205 (LVAGAVAGAVSRTGTAPL). Topologically, residues 206–242 (DRLKVFMQVHASKSNRLNILGGLRNMIQEGGVLSLWR) are mitochondrial matrix. A helical transmembrane segment spans residues 243–262 (GNGINVLKIAPESAIKFMAY). Residues 263–285 (EQIKRAIRGQQETLHVQERFVAG) lie on the Mitochondrial intermembrane side of the membrane. The chain crosses the membrane as a helical span at residues 286-299 (SLAGATAQTIIYPM). The Mitochondrial matrix portion of the chain corresponds to 300-335 (EVLKTRLTLRRTGQYKGLLDCAKRILEREGPRAFYR). Residues 336 to 355 (GYLPNVLGIIPYAGIDLAVY) traverse the membrane as a helical segment. At 356–378 (ETLKNRWLQQYSHESANPGILVL) the chain is on the mitochondrial intermembrane side. Residues 379 to 396 (LGCGTISSTCGQIASYPL) traverse the membrane as a helical segment. The Mitochondrial matrix segment spans residues 397-435 (ALVRTRMQAQASIEGGPQVSMVGLLRHILSQEGVWGLYR). The chain crosses the membrane as a helical span at residues 436 to 455 (GIAPNFMKVIPAVSISYVVY). At 456-467 (ENMKQALGVTSR) the chain is on the mitochondrial intermembrane side.

It belongs to the mitochondrial carrier (TC 2.A.29) family. In terms of assembly, interacts with MCU. Interacts with MICU1.

It is found in the mitochondrion inner membrane. It carries out the reaction Mg(2+)(out) + phosphate(in) + ATP(out) = Mg(2+)(in) + phosphate(out) + ATP(in). It catalyses the reaction ADP(out) + phosphate(in) + H(+)(out) = ADP(in) + phosphate(out) + H(+)(in). The enzyme catalyses AMP(out) + phosphate(in) = AMP(in) + phosphate(out). The catalysed reaction is phosphate(in) + ATP(out) + 2 H(+)(out) = phosphate(out) + ATP(in) + 2 H(+)(in). It carries out the reaction dADP(in) + ADP(out) = dADP(out) + ADP(in). It catalyses the reaction Mg(2+)(in) + ADP(out) + ATP(in) + H(+)(out) = Mg(2+)(out) + ADP(in) + ATP(out) + H(+)(in). The enzyme catalyses ADP(out) + diphosphate(in) = ADP(in) + diphosphate(out). The catalysed reaction is dAMP(in) + ADP(out) + H(+)(out) = dAMP(out) + ADP(in) + H(+)(in). It carries out the reaction 3'-AMP(in) + ADP(out) + H(+)(out) = 3'-AMP(out) + ADP(in) + H(+)(in). It catalyses the reaction dAMP(out) + phosphate(in) = dAMP(in) + phosphate(out). The enzyme catalyses 3'-AMP(out) + phosphate(in) = 3'-AMP(in) + phosphate(out). The catalysed reaction is dADP(out) + phosphate(in) + H(+)(out) = dADP(in) + phosphate(out) + H(+)(in). With respect to regulation, activated by an increase in cytosolic calcium levels that induce a conformational change of the N-terminal regulatory domain, uncapping the channel and allowing transport. Electroneutral antiporter that mediates the transport of adenine nucleotides through the inner mitochondrial membrane. Originally identified as an ATP-magnesium/inorganic phosphate antiporter, it also acts as a broad specificity adenyl nucleotide antiporter. By regulating the mitochondrial matrix adenine nucleotide pool could adapt to changing cellular energetic demands and indirectly regulate adenine nucleotide-dependent metabolic pathways. Also acts as a regulator of mitochondrial calcium uptake and can probably transport trace amounts of other divalent metal cations in complex with ATP. In vitro, a low activity is also observed with guanyl and pyrimidine nucleotides. The sequence is that of Mitochondrial adenyl nucleotide antiporter SLC25A23 from Mus musculus (Mouse).